The sequence spans 291 residues: Sulfotransferase 1A1 (291 aa).

44 to 49 (KSGTTW) provides a ligand contact to 3'-phosphoadenylyl sulfate. 102–104 (KTH) is a binding site for substrate. His-104 (proton acceptor) is an active-site residue. Residues Arg-126, Ser-134, Tyr-189, 223–228 (TSFKKM), and 251–255 (FMRKG) each bind 3'-phosphoadenylyl sulfate. Position 134 is a phosphoserine (Ser-134).

The protein belongs to the sulfotransferase 1 family. In terms of assembly, homodimer. The N-terminus is blocked. Liver, kidney, heart and colon.

It is found in the cytoplasm. The enzyme catalyses a phenol + 3'-phosphoadenylyl sulfate = an aryl sulfate + adenosine 3',5'-bisphosphate + H(+). The catalysed reaction is 17beta-estradiol + 3'-phosphoadenylyl sulfate = 17beta-estradiol 3-sulfate + adenosine 3',5'-bisphosphate + H(+). It catalyses the reaction 4-ethylphenol + 3'-phosphoadenylyl sulfate = 4-ethylphenyl sulfate + adenosine 3',5'-bisphosphate + H(+). It carries out the reaction 4-nitrophenol + 3'-phosphoadenylyl sulfate = 4-nitrophenyl sulfate + adenosine 3',5'-bisphosphate. The enzyme catalyses dopamine + 3'-phosphoadenylyl sulfate = dopamine 3-O-sulfate + adenosine 3',5'-bisphosphate + H(+). The catalysed reaction is dopamine + 3'-phosphoadenylyl sulfate = dopamine 4-O-sulfate + adenosine 3',5'-bisphosphate + H(+). It catalyses the reaction 3,3',5-triiodo-L-thyronine + 3'-phosphoadenylyl sulfate = 3,3',5-triiodo-L-thyronine sulfate + adenosine 3',5'-bisphosphate + H(+). It carries out the reaction 3,3',5'-triiodo-L-thyronine + 3'-phosphoadenylyl sulfate = 3,3',5'-triiodo-L-thyronine sulfate + adenosine 3',5'-bisphosphate + H(+). The enzyme catalyses 3,3'-diiodo-L-thyronine + 3'-phosphoadenylyl sulfate = 3,3'-diiodo-L-thyronine sulfate + adenosine 3',5'-bisphosphate + H(+). The catalysed reaction is L-thyroxine + 3'-phosphoadenylyl sulfate = L-thyroxine sulfate + adenosine 3',5'-bisphosphate + H(+). Sulfotransferase that utilizes 3'-phospho-5'-adenylyl sulfate (PAPS) as sulfonate donor to catalyze the sulfate conjugation of a wide variety of acceptor molecules bearing a hydroxyl or an amine group. Sulfonation increases the water solubility of most compounds, and therefore their renal excretion, but it can also result in bioactivation to form active metabolites. Displays broad substrate specificity for small phenolic compounds. Plays an important roles in the sulfonation of endogenous molecules such as steroid hormones. Mediates the sulfate conjugation of a variety of xenobiotics, including the drugs acetaminophen and minoxidil. Mediates also the metabolic activation of carcinogenic N-hydroxyarylamines leading to highly reactive intermediates capable of forming DNA adducts, potentially resulting in mutagenesis. May play a role in gut microbiota-host metabolic interaction. O-sulfonates 4-ethylphenol (4-EP), a dietary tyrosine-derived metabolite produced by gut bacteria. The product 4-EPS crosses the blood-brain barrier and may negatively regulate oligodendrocyte maturation and myelination, affecting the functional connectivity of different brain regions associated with the limbic system. Catalyzes the sulfate conjugation of dopamine. Catalyzes the sulfation of T4 (L-thyroxine/3,5,3',5'-tetraiodothyronine), T3 (3,5,3'-triiodothyronine), rT3 (3,3',5'-triiodothyronine) and 3,3'-T2 (3,3'-diiodothyronine), with a substrate preference of 3,3'-T2 &gt; rT3 &gt; T3 &gt; T4. This chain is Sulfotransferase 1A1 (Sult1a1), found in Rattus norvegicus (Rat).